A 445-amino-acid chain; its full sequence is tRNA-2-methylthio-N(6)-dimethylallyladenosine synthase (445 aa).

Residues 3 to 124 form the MTTase N-terminal domain; the sequence is KKLYIKTYGC…LPELISKVVR (122 aa). [4Fe-4S] cluster contacts are provided by C12, C48, C87, C162, C166, and C169. The region spanning 148–380 is the Radical SAM core domain; the sequence is YPQGASSFIS…QQELTAQQLA (233 aa). The region spanning 383-445 is the TRAM domain; sequence ESCVGSIMKV…ASNSLTGEVI (63 aa).

The protein belongs to the methylthiotransferase family. MiaB subfamily. As to quaternary structure, monomer. [4Fe-4S] cluster is required as a cofactor.

The protein resides in the cytoplasm. The enzyme catalyses N(6)-dimethylallyladenosine(37) in tRNA + (sulfur carrier)-SH + AH2 + 2 S-adenosyl-L-methionine = 2-methylsulfanyl-N(6)-dimethylallyladenosine(37) in tRNA + (sulfur carrier)-H + 5'-deoxyadenosine + L-methionine + A + S-adenosyl-L-homocysteine + 2 H(+). Catalyzes the methylthiolation of N6-(dimethylallyl)adenosine (i(6)A), leading to the formation of 2-methylthio-N6-(dimethylallyl)adenosine (ms(2)i(6)A) at position 37 in tRNAs that read codons beginning with uridine. The protein is tRNA-2-methylthio-N(6)-dimethylallyladenosine synthase of Rickettsia felis (strain ATCC VR-1525 / URRWXCal2) (Rickettsia azadi).